A 1031-amino-acid polypeptide reads, in one-letter code: Telomerase reverse transcriptase (1031 aa).

The Reverse transcriptase domain occupies 498–852 (KEVEEWKKSL…DYCDWIGISI (355 aa)). Asp603, Asp781, and Asp782 together coordinate Mg(2+).

Belongs to the reverse transcriptase family. Telomerase subfamily. As to quaternary structure, component of the telomerase holoenzyme complex composed minimally of the catalytic subunit p123 and the telomerase RNA template component.

It is found in the nucleus. The protein resides in the chromosome. The protein localises to the telomere. The enzyme catalyses DNA(n) + a 2'-deoxyribonucleoside 5'-triphosphate = DNA(n+1) + diphosphate. Functionally, telomerase is a ribonucleoprotein enzyme essential for the replication of chromosome termini in most eukaryotes. It elongates telomeres. It is a reverse transcriptase that adds simple sequence repeats to chromosome ends by copying a template sequence within the RNA component of the enzyme. The sequence is that of Telomerase reverse transcriptase from Euplotes aediculatus (Ciliate).